Reading from the N-terminus, the 342-residue chain is Isopentenyl-diphosphate delta-isomerase (342 aa).

Position 11–12 (11–12 (RK)) interacts with substrate. Residues S68, 69 to 71 (SMT), S99, and N127 contribute to the FMN site. 99 to 101 (SMR) contributes to the substrate binding site. E163 lines the Mg(2+) pocket. FMN contacts are provided by residues K194, T224, and 295–296 (AG).

It belongs to the IPP isomerase type 2 family. As to quaternary structure, homooctamer. Dimer of tetramers. The cofactor is FMN. NADPH serves as cofactor. It depends on Mg(2+) as a cofactor.

Its subcellular location is the cytoplasm. The enzyme catalyses isopentenyl diphosphate = dimethylallyl diphosphate. Functionally, involved in the biosynthesis of isoprenoids. Catalyzes the 1,3-allylic rearrangement of the homoallylic substrate isopentenyl (IPP) to its allylic isomer, dimethylallyl diphosphate (DMAPP). This is Isopentenyl-diphosphate delta-isomerase from Rickettsia prowazekii (strain Madrid E).